Reading from the N-terminus, the 110-residue chain is HIT-like protein CPn_0488/CP_0266/CPj0488/CpB0508 (110 aa).

The HIT domain occupies 3-110 (VFKQIIDGLI…LGGRPLGAIA (108 aa)). A Histidine triad motif motif is present at residues 95 to 99 (HLHIH).

The chain is HIT-like protein CPn_0488/CP_0266/CPj0488/CpB0508 from Chlamydia pneumoniae (Chlamydophila pneumoniae).